The sequence spans 139 residues: MGGGERYNIPAPQSRNVSKNQQQLNRQKTKEQNSQMKIVHKKKERGHGYNSSAAAWQAMQNGGKNKNFPNNQSWNSSLSGPRLLFKSQANQNYAGAKFSEPPSPSVLPKPPSHWVPVSFNPSDKEIMTFQLKTLLKVQV.

Disordered stretches follow at residues 1 to 51 (MGGG…GYNS), 61 to 80 (NGGKNKNFPNNQSWNSSLSG), and 89 to 110 (ANQNYAGAKFSEPPSPSVLPKP). Composition is skewed to polar residues over residues 11 to 36 (APQSRNVSKNQQQLNRQKTKEQNSQM) and 61 to 79 (NGGKNKNFPNNQSWNSSLS). Positions 99–105 (SEPPSPS) match the SH3-binding motif. Pro residues predominate over residues 101 to 110 (PPSPSVLPKP).

The protein belongs to the PNRC family. PNRC2 subfamily. Interacts with UPF1/RENT1; preferentially interacts with hyperphosphorylated form. Interacts with DCP1A. Interacts with many nuclear receptors including ESR1, ESRRA, ESRRG, NR3C1/GR, NR5A1, PGR, TR, RAR and RXR. As to expression, expressed in heart, lung, muscle and brain.

It is found in the nucleus. It localises to the cytoplasm. The protein localises to the P-body. Involved in nonsense-mediated mRNA decay (NMD) by acting as a bridge between the mRNA decapping complex and the NMD machinery. May act by targeting the NMD machinery to the P-body and recruiting the decapping machinery to aberrant mRNAs. Required for UPF1/RENT1 localization to the P-body. Plays a role in glucocorticoid receptor-mediated mRNA degradation by interacting with the glucocorticoid receptor NR3C1 in a ligand-dependent manner when it is bound to the 5' UTR of target mRNAs and recruiting the RNA helicase UPF1 and the mRNA-decapping enzyme DCP1A, leading to RNA decay. Also acts as a nuclear receptor coactivator. May play a role in controlling the energy balance between energy storage and energy expenditure. The sequence is that of Proline-rich nuclear receptor coactivator 2 (PNRC2) from Homo sapiens (Human).